A 799-amino-acid polypeptide reads, in one-letter code: Zinc finger protein 227 (799 aa).

The KRAB domain maps to 23-94 (VTFKDVAVVF…ETETQRSSKH (72 aa)). 19 C2H2-type zinc fingers span residues 250–272 (HPCG…PNVH), 269–291 (PNVH…QRIH), 324–346 (YRCD…YRTH), 352–374 (YKCE…QRVH), 380–402 (YKCE…QRVH), 408–430 (YKCE…QRVH), 436–458 (YKCD…RRVH), 464–486 (YKCE…FRVH), 492–514 (YKCK…QNVH), 520–542 (FKCE…QRVH), 548–570 (YRCD…QVIH), 576–598 (YKCE…QRVH), 604–626 (YKCE…QRVH), 632–654 (YKCG…QRVH), 660–682 (YKCD…QRGH), 688–710 (YKCE…QRVH), 716–738 (HICE…LGVH), 744–766 (FKCE…QRVH), and 772–794 (YKCD…QKVH).

Belongs to the krueppel C2H2-type zinc-finger protein family.

It is found in the nucleus. May be involved in transcriptional regulation. The chain is Zinc finger protein 227 (ZNF227) from Homo sapiens (Human).